The following is a 219-amino-acid chain: Small ribosomal subunit protein uS3 (219 aa).

The KH type-2 domain occupies 41 to 110 (IRKIINTEYS…DVSINICEVK (70 aa)).

Belongs to the universal ribosomal protein uS3 family. In terms of assembly, part of the 30S ribosomal subunit. Forms a tight complex with proteins S10 and S14.

Its function is as follows. Binds the lower part of the 30S subunit head. Binds mRNA in the 70S ribosome, positioning it for translation. The protein is Small ribosomal subunit protein uS3 of Orientia tsutsugamushi (strain Ikeda) (Rickettsia tsutsugamushi).